Consider the following 411-residue polypeptide: NADH-quinone oxidoreductase subunit H (411 aa).

The next 9 helical transmembrane spans lie at 18 to 38, 84 to 104, 124 to 144, 165 to 185, 198 to 218, 260 to 280, 288 to 308, 321 to 341, and 352 to 372; these read LAKS…AILI, WIYL…FAVI, LPVA…GIVL, VISY…YAGT, TWYI…MVGE, VSAL…PISI, WWPL…FMWL, MALG…IVAI, and APAT…ALLG.

It belongs to the complex I subunit 1 family. In terms of assembly, NDH-1 is composed of 14 different subunits. Subunits NuoA, H, J, K, L, M, N constitute the membrane sector of the complex.

It is found in the cell membrane. The enzyme catalyses a quinone + NADH + 5 H(+)(in) = a quinol + NAD(+) + 4 H(+)(out). In terms of biological role, NDH-1 shuttles electrons from NADH, via FMN and iron-sulfur (Fe-S) centers, to quinones in the respiratory chain. The immediate electron acceptor for the enzyme in this species is believed to be menaquinone. Couples the redox reaction to proton translocation (for every two electrons transferred, four hydrogen ions are translocated across the cytoplasmic membrane), and thus conserves the redox energy in a proton gradient. This subunit may bind ubiquinone. The chain is NADH-quinone oxidoreductase subunit H from Mycolicibacterium vanbaalenii (strain DSM 7251 / JCM 13017 / BCRC 16820 / KCTC 9966 / NRRL B-24157 / PYR-1) (Mycobacterium vanbaalenii).